Consider the following 272-residue polypeptide: Tryptophan synthase alpha chain (272 aa).

Catalysis depends on proton acceptor residues glutamate 53 and aspartate 64.

Belongs to the TrpA family. As to quaternary structure, tetramer of two alpha and two beta chains.

It catalyses the reaction (1S,2R)-1-C-(indol-3-yl)glycerol 3-phosphate + L-serine = D-glyceraldehyde 3-phosphate + L-tryptophan + H2O. It functions in the pathway amino-acid biosynthesis; L-tryptophan biosynthesis; L-tryptophan from chorismate: step 5/5. Functionally, the alpha subunit is responsible for the aldol cleavage of indoleglycerol phosphate to indole and glyceraldehyde 3-phosphate. The chain is Tryptophan synthase alpha chain from Xanthomonas campestris pv. campestris (strain B100).